The sequence spans 81 residues: Protein L83L (81 aa).

The interval 1-28 (MDTSLKNNDGALEADNKNYQDYKDEPDK) is disordered. Positions 14-28 (ADNKNYQDYKDEPDK) are enriched in basic and acidic residues.

It belongs to the asfivirus L83L family. Interacts with host IL1B.

The protein localises to the host cytoplasm. Functionally, may subvert the host innate immune response by interacting with host IL1B and interfering with its function. This is Protein L83L from Ornithodoros (relapsing fever ticks).